The chain runs to 395 residues: Zinc finger protein 200 (395 aa).

The interval 157 to 208 (VNGSNPEGEDPEREPVENEDYREKSSDDDEMDSSLVSQQPPDNQEKERLNTS) is disordered. The segment covering 169–181 (REPVENEDYREKS) has biased composition (basic and acidic residues). The tract at residues 246–395 (RRTRRWYTCP…HSACKTRKQK (150 aa)) is interaction with PRMT3. 5 C2H2-type zinc fingers span residues 252 to 274 (YTCPLCGKQFNESSYLISHQRTH), 280 to 302 (YDCNHCGKSFNHKTNLNKHERIH), 308 to 330 (YSCSQCGKNFRQNSHRSRHEGIH), 336 to 358 (FKCPECGKTFPKNEEFVLHLQSH), and 364 to 386 (YGCKKCGRRFGRLSNCTRHEKTH).

As to quaternary structure, interacts (via C-terminus) with PRMT3 (via zinc-finger); the interaction is direct and required to localize protein arginine N-methyltransferase PRMT3 to the nucleus and inhibit its proteasomal degradation. Highly expressed in testis, weakly expressed in spleen, thymus, prostate, ovary, small intestine colon and peripheral blood leukocytes.

The protein resides in the nucleus. Localizes protein arginine N-methyltransferase PRMT3 to the nucleus. The chain is Zinc finger protein 200 (ZNF200) from Homo sapiens (Human).